The sequence spans 253 residues: Ubiquinone/menaquinone biosynthesis C-methyltransferase UbiE (253 aa).

S-adenosyl-L-methionine contacts are provided by residues Thr76, Asp97, 125–126 (NA), and Ser142.

It belongs to the class I-like SAM-binding methyltransferase superfamily. MenG/UbiE family.

The catalysed reaction is a 2-demethylmenaquinol + S-adenosyl-L-methionine = a menaquinol + S-adenosyl-L-homocysteine + H(+). It catalyses the reaction a 2-methoxy-6-(all-trans-polyprenyl)benzene-1,4-diol + S-adenosyl-L-methionine = a 5-methoxy-2-methyl-3-(all-trans-polyprenyl)benzene-1,4-diol + S-adenosyl-L-homocysteine + H(+). Its pathway is quinol/quinone metabolism; menaquinone biosynthesis; menaquinol from 1,4-dihydroxy-2-naphthoate: step 2/2. It participates in cofactor biosynthesis; ubiquinone biosynthesis. Its function is as follows. Methyltransferase required for the conversion of demethylmenaquinol (DMKH2) to menaquinol (MKH2) and the conversion of 2-polyprenyl-6-methoxy-1,4-benzoquinol (DDMQH2) to 2-polyprenyl-3-methyl-6-methoxy-1,4-benzoquinol (DMQH2). This is Ubiquinone/menaquinone biosynthesis C-methyltransferase UbiE from Xanthomonas oryzae pv. oryzae (strain MAFF 311018).